The chain runs to 424 residues: Putative ankyrin repeat protein R858 (424 aa).

ANK repeat units follow at residues 115–144, 147–177, 184–215, and 219–252; these read HLMC…FTKR, TDHT…SDYF, INDS…SINY, and TGST…DIHE.

The polypeptide is Putative ankyrin repeat protein R858 (Acanthamoeba polyphaga (Amoeba)).